The primary structure comprises 424 residues: Serine--tRNA ligase (424 aa).

230–232 is a binding site for L-serine; the sequence is TAE. 261-263 contacts ATP; that stretch reads RSE. Residue E284 participates in L-serine binding. 348 to 351 contacts ATP; sequence EISS. S384 serves as a coordination point for L-serine.

It belongs to the class-II aminoacyl-tRNA synthetase family. Type-1 seryl-tRNA synthetase subfamily. As to quaternary structure, homodimer. The tRNA molecule binds across the dimer.

It is found in the cytoplasm. The enzyme catalyses tRNA(Ser) + L-serine + ATP = L-seryl-tRNA(Ser) + AMP + diphosphate + H(+). The catalysed reaction is tRNA(Sec) + L-serine + ATP = L-seryl-tRNA(Sec) + AMP + diphosphate + H(+). It participates in aminoacyl-tRNA biosynthesis; selenocysteinyl-tRNA(Sec) biosynthesis; L-seryl-tRNA(Sec) from L-serine and tRNA(Sec): step 1/1. In terms of biological role, catalyzes the attachment of serine to tRNA(Ser). Is also able to aminoacylate tRNA(Sec) with serine, to form the misacylated tRNA L-seryl-tRNA(Sec), which will be further converted into selenocysteinyl-tRNA(Sec). This chain is Serine--tRNA ligase, found in Streptococcus pneumoniae (strain ATCC 700669 / Spain 23F-1).